Here is a 225-residue protein sequence, read N- to C-terminus: 7-cyano-7-deazaguanine synthase (225 aa).

Position 7–17 (7–17 (LSGGMDSTTLL)) interacts with ATP. Cys183, Cys191, Cys194, and Cys197 together coordinate Zn(2+).

This sequence belongs to the QueC family. As to quaternary structure, homodimer. Requires Zn(2+) as cofactor.

The enzyme catalyses 7-carboxy-7-deazaguanine + NH4(+) + ATP = 7-cyano-7-deazaguanine + ADP + phosphate + H2O + H(+). Its pathway is purine metabolism; 7-cyano-7-deazaguanine biosynthesis. Its function is as follows. Catalyzes the ATP-dependent conversion of 7-carboxy-7-deazaguanine (CDG) to 7-cyano-7-deazaguanine (preQ(0)). This is 7-cyano-7-deazaguanine synthase from Caldicellulosiruptor saccharolyticus (strain ATCC 43494 / DSM 8903 / Tp8T 6331).